The following is a 416-amino-acid chain: UPF0761 membrane protein Rfer_2991 (416 aa).

Transmembrane regions (helical) follow at residues 60-80 (MALVPLVTVALAIFTAFPMFA), 117-137 (LGGAGIALLLVTAVALILTID), 156-176 (VLVYWAALTLGPLVLGVSLSI), 187-207 (VVGVMPGGVQFLLDVLQFFMV), 222-242 (WVKWSHAWAGGMFVSAGLELA), and 268-288 (ILLIWIYVAWIIVLLGAVIAA).

This sequence belongs to the UPF0761 family.

The protein resides in the cell inner membrane. The polypeptide is UPF0761 membrane protein Rfer_2991 (Albidiferax ferrireducens (strain ATCC BAA-621 / DSM 15236 / T118) (Rhodoferax ferrireducens)).